The primary structure comprises 153 residues: Protein SprT-like (153 aa).

One can recognise a SprT-like domain in the interval 7–145 (QTLVEKISIV…VCGKCHGRLS (139 aa)). A Zn(2+)-binding site is contributed by His67. Glu68 is an active-site residue. Zn(2+) is bound at residue His71.

This sequence belongs to the SprT family. Zn(2+) is required as a cofactor.

It is found in the cytoplasm. This chain is Protein SprT-like, found in Enterococcus faecalis (strain ATCC 700802 / V583).